A 312-amino-acid chain; its full sequence is Tetraacyldisaccharide 4'-kinase (312 aa).

60-67 (IAGGSGKT) lines the ATP pocket.

This sequence belongs to the LpxK family.

It catalyses the reaction a lipid A disaccharide + ATP = a lipid IVA + ADP + H(+). The protein operates within glycolipid biosynthesis; lipid IV(A) biosynthesis; lipid IV(A) from (3R)-3-hydroxytetradecanoyl-[acyl-carrier-protein] and UDP-N-acetyl-alpha-D-glucosamine: step 6/6. Functionally, transfers the gamma-phosphate of ATP to the 4'-position of a tetraacyldisaccharide 1-phosphate intermediate (termed DS-1-P) to form tetraacyldisaccharide 1,4'-bis-phosphate (lipid IVA). The protein is Tetraacyldisaccharide 4'-kinase of Helicobacter acinonychis (strain Sheeba).